A 609-amino-acid polypeptide reads, in one-letter code: Leukotriene A-4 hydrolase (609 aa).

A peptide-binding positions include 131–133 (QCQ) and 263–268 (PYGGME). H292 serves as a coordination point for Zn(2+). E293 (proton acceptor) is an active-site residue. 2 residues coordinate Zn(2+): H296 and E315. The active-site Proton donor is Y380. 560–562 (RMK) contributes to the a peptide binding site.

It belongs to the peptidase M1 family. As to quaternary structure, homodimer. Requires Zn(2+) as cofactor. As to expression, expressed in oocytes.

The protein resides in the cytoplasm. It carries out the reaction Release of the N-terminal residue from a tripeptide.. The catalysed reaction is leukotriene A4 + H2O = leukotriene B4. The protein operates within lipid metabolism; leukotriene B4 biosynthesis. Its activity is regulated as follows. The epoxide hydrolase activity is mildly restrained by suicide inactivation, possibly involving binding of LTA4 to Tyr-380. In terms of biological role, bifunctional zinc metalloenzyme that comprises both epoxide hydrolase (EH) and aminopeptidase activities. Acts as an epoxide hydrolase to catalyze the conversion of leukotriene A4 (LTA4) to the pro-inflammatory mediator leukotriene B4 (LTB4). During the conversion of LTA4 to LTB4, a second product is formed, the isomeric delta6-trans-delta8-cis-LTB4 (5S,12R-dihydroxy-6,10-trans-8,14-cis-eicosatetraenoic acid), with a relative formation of 10% delta6-trans-delta8-cis-LTB4 compared to 90% LTB4. The production of delta6-trans-delta8-cis-LTB4 seems to depend on the phenylalanine residue at position 375. Also has aminopeptidase activity. This chain is Leukotriene A-4 hydrolase, found in Xenopus laevis (African clawed frog).